A 111-amino-acid polypeptide reads, in one-letter code: TPR repeat-containing protein associated with Hsp90 (111 aa).

An N-acetylserine modification is found at Ser-2. 2 TPR repeats span residues 4 to 37 (FEKQ…QPQN) and 39 to 71 (VGYS…TSTA).

In terms of assembly, component of the R2TP complex composed at least of RVB1, RVB2, TAH1 and PIH1. Also interacts with HSP90.

Its subcellular location is the cytoplasm. The protein resides in the nucleus. In Saccharomyces cerevisiae (strain ATCC 204508 / S288c) (Baker's yeast), this protein is TPR repeat-containing protein associated with Hsp90 (TAH1).